The sequence spans 561 residues: Carboxylesterase 4A (561 aa).

Positions 1–20 (MRWILCWSLTLCLMAQTALG) are cleaved as a signal peptide. Residues cysteine 88 and cysteine 116 are joined by a disulfide bond. A glycan (N-linked (GlcNAc...) asparagine) is linked at asparagine 214. The active-site Acyl-ester intermediate is serine 221. Cysteines 273 and 284 form a disulfide. The N-linked (GlcNAc...) asparagine glycan is linked to asparagine 276. Glutamate 353 serves as the catalytic Charge relay system. Residue asparagine 388 is glycosylated (N-linked (GlcNAc...) asparagine). The active-site Charge relay system is histidine 467.

It belongs to the type-B carboxylesterase/lipase family.

It is found in the secreted. Probable carboxylesterase. The protein is Carboxylesterase 4A (CES4A) of Homo sapiens (Human).